A 568-amino-acid polypeptide reads, in one-letter code: Type 2 DNA topoisomerase 6 subunit B (568 aa).

Residues asparagine 46, aspartate 78, 99-100, 109-116, and lysine 473 each bind ATP; these read TK and GQQGIGIS.

This sequence belongs to the TOP6B family. Homodimer. Heterotetramer of two Top6A and two Top6B chains.

The enzyme catalyses ATP-dependent breakage, passage and rejoining of double-stranded DNA.. Its function is as follows. Relaxes both positive and negative superturns and exhibits a strong decatenase activity. This chain is Type 2 DNA topoisomerase 6 subunit B, found in Pyrococcus furiosus (strain ATCC 43587 / DSM 3638 / JCM 8422 / Vc1).